The chain runs to 3021 residues: Genome polyprotein (3021 aa).

Residue Ser-2 is modified to N-acetylserine; by host. Residues Ser-2–Lys-23 form an interaction with STAT1 region. Positions Ser-2–Pro-58 are interaction with EIF2AK2/PKR. Residues Ser-2–Arg-59 are interaction with DDX3X. Residues Ser-2–Ser-75 form a disordered region. The Cytoplasmic portion of the chain corresponds to Ser-2–Asn-168. Short sequence motifs (nuclear localization signal) lie at residues Pro-5 to Arg-13 and Pro-38 to Arg-43. Over residues Pro-7–Ile-16 the composition is skewed to basic residues. Ser-53 carries the phosphoserine; by host modification. 2 consecutive short sequence motifs (nuclear localization signal) follow at residues Pro-58–Pro-64 and Pro-66–Ser-71. Over residues Pro-58 to Ala-68 the composition is skewed to basic residues. Phosphoserine; by host is present on residues Ser-99 and Ser-116. The tract at residues Pro-112–Ala-152 is important for endoplasmic reticulum and mitochondrial localization. Residues Val-122 to Ser-173 are interaction with APOA2. Positions Phe-164–Gly-167 are important for lipid droplets localization. Residues Leu-169–Ala-189 traverse the membrane as a helical segment. Residues Leu-178–Ser-191 constitute a propeptide, ER anchor for the core protein, removed in mature form by host signal peptidase. The Lumenal segment spans residues Ala-190–Gly-358. Residues Asn-196, Asn-209, and Asn-234 are each glycosylated (N-linked (GlcNAc...) asparagine; by host). Residues Leu-265–Arg-296 form an important for fusion region. Asn-305 carries N-linked (GlcNAc...) asparagine; by host glycosylation. Residues Leu-359–Ser-379 form a helical membrane-spanning segment. Over Gly-380–Leu-731 the chain is Lumenal. The interval Thr-385–Gln-412 is HVR1. N-linked (GlcNAc...) (high mannose) asparagine; by host glycans are attached at residues Asn-417, Asn-423, and Asn-430. Disulfide bonds link Cys-429/Cys-553, Cys-452/Cys-459, Cys-487/Cys-495, and Cys-504/Cys-509. N-linked (GlcNAc...) asparagine; by host glycosylation is present at Asn-448. The HVR2 stretch occupies residues Ala-475–Gly-479. Asn-476 carries an N-linked (GlcNAc...) asparagine; by host glycan. Residues Ser-481–Pro-494 are CD81-binding 1. N-linked (GlcNAc...) asparagine; by host glycosylation occurs at Asn-533. The segment at Pro-545 to Gly-552 is CD81-binding 2. Asn-557 carries an N-linked (GlcNAc...) asparagine; by host glycan. Cystine bridges form between Cys-565/Cys-570, Cys-587/Cys-591, Cys-603/Cys-626, and Cys-613/Cys-650. N-linked (GlcNAc...) (high mannose) asparagine; by host glycosylation is found at Asn-629 and Asn-651. Cysteines 658 and 683 form a disulfide. A PKR/eIF2-alpha phosphorylation homology domain (PePHD) region spans residues Ser-666–Glu-677. Residues Leu-732–Ala-752 traverse the membrane as a helical segment. The Lumenal segment spans residues Ala-753–Val-763. Residues Ala-764 to Val-784 traverse the membrane as a helical segment. Residues Arg-785–Lys-787 lie on the Cytoplasmic side of the membrane. A helical membrane pass occupies residues Leu-788 to Leu-809. At Pro-810–Glu-819 the chain is on the lumenal side. Residues Asp-820–Trp-840 traverse the membrane as a helical segment. Over Tyr-841–Trp-844 the chain is Cytoplasmic. A helical transmembrane segment spans residues Ile-845–His-864. The Lumenal portion of the chain corresponds to Val-865–Tyr-887. A helical transmembrane segment spans residues Pro-888–Ile-908. The region spanning Leu-905–Leu-1032 is the Peptidase C18 domain. Topologically, residues Gln-909–Thr-1663 are cytoplasmic. The protease NS2-3 stretch occupies residues Ala-910–Arg-1212. Cys-928 is lipidated: S-palmitoyl cysteine; by host. The segment at Met-935–Leu-955 is interaction with host SCPS1. Residues His-958, Glu-978, and Cys-999 each act as for protease NS2 activity; shared with dimeric partner in the active site. The Peptidase S29 domain maps to Ala-1033 to Pro-1214. Active-site charge relay system; for serine protease NS3 activity residues include His-1089 and Asp-1113. 2 residues coordinate Zn(2+): Cys-1129 and Cys-1131. Catalysis depends on Ser-1171, which acts as the Charge relay system; for serine protease NS3 activity. Positions 1177 and 1181 each coordinate Zn(2+). In terms of domain architecture, Helicase ATP-binding spans Pro-1223–Ser-1375. Residue Ala-1236–Ser-1243 participates in ATP binding. Ser-1243 serves as a coordination point for Mg(2+). Positions Asp-1322 to His-1325 match the DECH box motif. Positions Tyr-1382 to Arg-1544 constitute a Helicase C-terminal domain. The interval Gln-1492–Thr-1504 is RNA-binding. Residues Ser-1664–Gly-1684 traverse the membrane as a helical segment. The tract at residues Cys-1685–Gly-1696 is NS3-binding. The Cytoplasmic portion of the chain corresponds to Cys-1685–Gln-1811. Residues Thr-1812–Gln-1830 traverse the membrane as a helical segment. The Lumenal segment spans residues Ala-1831–Ala-1834. Residues Phe-1835–Leu-1855 traverse the membrane as a helical segment. Residue Asp-1856 is a topological domain, cytoplasmic. Residues Ile-1857 to Gly-1877 form a helical membrane-spanning segment. The Lumenal segment spans residues Glu-1878–Asn-1887. A helical membrane pass occupies residues Leu-1888 to Leu-1908. At Arg-1909–Cys-1978 the chain is on the cytoplasmic side. Residue Cys-1978 is the site of S-palmitoyl cysteine; by host attachment. Residues Ser-1979–Ala-2008 lie within the membrane without spanning it. Residues Leu-2009–Arg-3000 are Cytoplasmic-facing. Zn(2+) contacts are provided by Cys-2017, Cys-2035, Cys-2037, and Cys-2058. The FKBP8-binding stretch occupies residues Glu-2126 to Ala-2214. The segment at Glu-2126–Thr-2338 is transcriptional activation. The segment at Pro-2141 to Pro-2145 is interaction with non-structural protein 4A. Residues Ala-2193–Pro-2215 are disordered. Positions Arg-2195–Glu-2448 are interaction with host SKP2. A phosphoserine; by host mark is found at Ser-2200, Ser-2203, Ser-2207, Ser-2210, Ser-2213, and Ser-2216. A compositionally biased stretch (low complexity) spans Ser-2200–Pro-2215. Positions Ser-2216–Lys-2255 are ISDR. Positions Ser-2216–Phe-2281 are interaction with EIF2AK2/PKR. Residues Lys-2255–Tyr-2312 form an NS4B-binding region. Residues Asp-2305–Val-2383 form a V3 region. Disordered regions lie at residues His-2318–Thr-2338 and Lys-2356–Val-2419. The SH3-binding signature appears at Pro-2328–Pro-2331. Residues Pro-2333–Leu-2341 carry the Nuclear localization signal motif. Lys-2356 is covalently cross-linked (Glycyl lysine isopeptide (Lys-Gly) (interchain with G-Cter in ubiquitin)). Low complexity predominate over residues Pro-2359 to Ser-2381. Ser-2459 and Ser-2472 each carry phosphoserine; by host. In terms of domain architecture, RdRp catalytic spans Pro-2644–Asp-2762. Mg(2+)-binding residues include Asp-2650, Asp-2748, and Asp-2749. A helical transmembrane segment spans residues Tyr-3001 to Arg-3021.

The protein belongs to the hepacivirus polyprotein family. As to quaternary structure, homooligomer. Interacts with E1 (via C-terminus). Interacts with the non-structural protein 5A. Interacts (via N-terminus) with host STAT1 (via SH2 domain); this interaction results in decreased STAT1 phosphorylation and ubiquitin-mediated proteasome-dependent STAT1 degradation, leading to decreased IFN-stimulated gene transcription. Interacts with host STAT3; this interaction constitutively activates STAT3. Interacts with host LTBR receptor. Interacts with host TNFRSF1A receptor and possibly induces apoptosis. Interacts with host HNRPK. Interacts with host YWHAE. Interacts with host UBE3A/E6AP. Interacts with host DDX3X. Interacts with host APOA2. Interacts with host RXRA protein. Interacts with host SP110 isoform 3/Sp110b; this interaction sequesters the transcriptional corepressor SP110 away from the nucleus. Interacts with host CREB3 nuclear transcription protein; this interaction triggers cell transformation. Interacts with host ACY3. Interacts with host C1QR1. Interacts with host RBM24; this interaction, which enhances the interaction of the mature core protein with 5'-UTR, may inhibit viral translation and favor replication. Interacts with host EIF2AK2/PKR; this interaction induces the autophosphorylation of EIF2AK2. Part of the viral assembly initiation complex composed of NS2, E1, E2, NS3, NS4A, NS5A and the mature core protein. Forms a heterodimer with envelope glycoprotein E2. Interacts with mature core protein. Interacts with protease NS2. The heterodimer E1/E2 interacts with host CLDN1; this interaction plays a role in viral entry into host cell. Interacts with host SPSB2 (via C-terminus). Part of the viral assembly initiation complex composed of NS2, E1, E2, NS3, NS4A, NS5A and the mature core protein. Interacts with host NEURL3; this interaction prevents E1 binding to glycoprotein E2. In terms of assembly, forms a heterodimer with envelope glycoprotein E1. Interacts with host CD81 and SCARB1 receptors; these interactions play a role in viral entry into host cell. Interacts with host EIF2AK2/PKR; this interaction inhibits EIF2AK2 and probably allows the virus to evade the innate immune response. Interacts with host CD209/DC-SIGN and CLEC4M/DC-SIGNR. Interact with host SPCS1; this interaction is essential for viral particle assembly. Interacts with protease NS2. The heterodimer E1/E2 interacts with host CLDN1; this interaction plays a role in viral entry into host cell. Part of the viral assembly initiation complex composed of NS2, E1, E2, NS3, NS4A, NS5A and the mature core protein. Interacts with host SLC3A2/4F2hc; the interaction may facilitate viral entry into host cell. Interacts with human PLSCR1. As to quaternary structure, homohexamer. Homoheptamer. Interacts with protease NS2. Homodimer. Interacts with host SPCS1; this interaction is essential for viral particle assembly. Interacts with envelope glycoprotein E1. Interacts with envelope glycoprotein E2. Interacts with viroporin p7. Interacts with serine protease/helicase NS3. Part of the replication complex composed of NS2, NS3, NS4A, NS4B, NS5A and the RNA-directed RNA polymerase embedded in an ER-derived membranous web. Part of the viral assembly initiation complex composed of NS2, E1, E2, NS3, NS4A, NS5A and the mature core protein. In terms of assembly, interacts with protease NS2. Interacts with non-structural protein 4A; this interaction stabilizes the folding of NS3 serine protease. NS3-NS4A interaction is essential for NS3 activation and allows membrane anchorage of the latter. NS3/NS4A complex also prevents phosphorylation of host IRF3, thus preventing the establishment of dsRNA induced antiviral state. Interacts with host MAVS; this interaction leads to the cleavage and inhibition of host MAVS. Interacts with host TICAM1; this interaction leads to the cleavage and inhibition of host TICAM1. Interacts with host TANK-binding kinase/TBK1; this interaction results in the inhibition of the association between TBK1 and IRF3, which leads to the inhibition of IRF3 activation. Interacts with host RBM24. Part of the replication complex composed of NS2, NS3, NS4A, NS4B, NS5A and the RNA-directed RNA polymerase embedded in an ER-derived membranous web. Part of the viral assembly initiation complex composed of NS2, E1, E2, NS3, NS4A, NS5A and the mature core protein. As to quaternary structure, interacts with NS3 serine protease; this interaction stabilizes the folding of NS3 serine protease. NS3-NS4A interaction is essential for NS3 activation and allows membrane anchorage of the latter. Interacts with non-structural protein 5A (via N-terminus). Part of the replication complex composed of NS2, NS3, NS4A, NS4B, NS5A and the RNA-directed RNA polymerase embedded in an ER-derived membranous web. Part of the viral assembly initiation complex composed of NS2, E1, E2, NS3, NS4A, NS5A and the mature core protein. Homomultimer. Interacts with non-structural protein NS5A. Interacts with host PLA2G4C; this interaction likely initiates the recruitment of replication complexes to lipid droplets. Interacts with host STING; this interaction disrupts the interaction between STING and TBK1 thereby suppressing the interferon signaling. Part of the replication complex composed of NS2, NS3, NS4A, NS4B, NS5A and the RNA-directed RNA polymerase embedded in an ER-derived membranous web. In terms of assembly, monomer. Homodimer; dimerization is required for RNA-binding. Interacts with the mature core protein. Interacts (via N-terminus) with non-structural protein 4A. Interacts with non-structural protein 4B. Interacts (via region D2) with RNA-directed RNA polymerase. Part of the viral assembly initiation complex composed of NS2, E1, E2, NS3, NS4A, NS5A and the mature core protein. Part of the replication complex composed of NS2, NS3, NS4A, NS4B, NS5A and the RNA-directed RNA polymerase embedded in an ER-derived membranous web. Interacts with host GRB2. Interacts with host BIN1. Interacts with host PIK3R1. Interacts with host SRCAP. Interacts with host FKBP8. Interacts (via C-terminus) with host VAPB (via MSP domain). Interacts with host EIF2AK2/PKR; this interaction leads to disruption of EIF2AK2 dimerization by NS5A and probably allows the virus to evade the innate immune response. Interacts (via N-terminus) with host PACSIN2 (via N-terminus); this interaction attenuates protein kinase C alpha-mediated phosphorylation of PACSIN2 by disrupting the interaction between PACSIN2 and PRKCA. Interacts (via N-terminus) with host SRC kinase (via SH2 domain). Interacts with most Src-family kinases. Interacts with host IFI27 and SKP2; promotes the ubiquitin-mediated proteasomal degradation of NS5A. Interacts with host GPS2. Interacts with host TNFRSF21; this interaction allows the modulation by the virus of JNK, p38 MAPK, STAT3, and Akt signaling pathways in a DR6-dependent manner. Interacts (via N-terminus) with host CIDEB (via N-terminus); this interaction seems to regulate the association of HCV particles with APOE. Interacts with host CHKA/Choline Kinase-alpha; CHKA bridges host PI4KA and NS5A and potentiates NS5A-stimulated PI4KA activity, which then facilitates the targeting of the ternary complex to the ER for viral replication. Interacts with host SPSB2 (via C-terminus); this interaction targets NS5A for ubiquitination and degradation. Interacts with host RAB18; this interaction may promote the association of NS5A and other replicase components with lipid droplets. Interacts (via region D2) with host PPIA/CYPA; the interaction stimulates RNA-binding ability of NS5A and is dependent on the peptidyl-prolyl cis-trans isomerase activity of PPIA/CYPA. Interacts with host TRIM14; this interaction induces the degradation of NS5A. As to quaternary structure, homooligomer. Interacts with non-structural protein 5A. Interacts with host VAPB. Interacts with host PRK2/PKN2. Interacts with host HNRNPA1 and SEPT6; these interactions facilitate viral replication. Part of the replication complex composed of NS2, NS3, NS4A, NS4B, NS5A and the RNA-directed RNA polymerase. Zn(2+) serves as cofactor. Requires Mg(2+) as cofactor. Specific enzymatic cleavages in vivo yield mature proteins. The structural proteins, core, E1, E2 and p7 are produced by proteolytic processing by host signal peptidases. The core protein precursor is synthesized as a 23 kDa, which is retained in the ER membrane through the hydrophobic signal peptide. Cleavage by the signal peptidase releases the 21 kDa mature core protein. The cleavage of the core protein precursor occurs between aminoacids 176 and 188 but the exact cleavage site is not known. Some degraded forms of the core protein appear as well during the course of infection. The other proteins (p7, NS2, NS3, NS4A, NS4B, NS5A and NS5B) are cleaved by the viral proteases. Autoprocessing between NS2 and NS3 is mediated by the NS2 cysteine protease catalytic domain and regulated by the NS3 N-terminal domain. Post-translationally, phosphorylated by host PKC and PKA. In terms of processing, ubiquitinated; mediated by UBE3A and leading to core protein subsequent proteasomal degradation. Highly N-glycosylated. Post-translationally, palmitoylation is required for NS2/3 autoprocessing and E2 recruitment to membranes. In terms of processing, palmitoylated. This modification may play a role in its polymerization or in protein-protein interactions. Phosphorylated on serines in a basal form termed p56. p58 is a hyperphosphorylated form of p56. p56 and p58 coexist in the cell in roughly equivalent amounts. Hyperphosphorylation is dependent on the presence of NS4A. Host CSNK1A1/CKI-alpha or RPS6KB1 kinases may be responsible for NS5A phosphorylation. Post-translationally, tyrosine phosphorylation is essential for the interaction with host SRC. In terms of processing, ubiquitinated. Ubiquitination, most probably at Lys-2356, mediated by host IFI27 and SKP2 leads to proteasomal degradation, restricting viral infection. Ubiquitination by host TRIM22 leads to interruption of viral replication. The N-terminus is phosphorylated by host PRK2/PKN2.

The protein resides in the host endoplasmic reticulum membrane. It is found in the host mitochondrion membrane. Its subcellular location is the virion. The protein localises to the host cytoplasm. It localises to the host nucleus. The protein resides in the host lipid droplet. It is found in the virion membrane. Its subcellular location is the host mitochondrion. The protein localises to the host cell membrane. It localises to the host perinuclear region. It carries out the reaction Hydrolysis of four peptide bonds in the viral precursor polyprotein, commonly with Asp or Glu in the P6 position, Cys or Thr in P1 and Ser or Ala in P1'.. The catalysed reaction is a ribonucleoside 5'-triphosphate + H2O = a ribonucleoside 5'-diphosphate + phosphate + H(+). The enzyme catalyses ATP + H2O = ADP + phosphate + H(+). It catalyses the reaction RNA(n) + a ribonucleoside 5'-triphosphate = RNA(n+1) + diphosphate. Inhibited by the antiviral drug hexamethylene amiloride. Inhibition by amantadine appears to be genotype-dependent. Also inhibited by long-alkyl-chain iminosugar derivatives. With respect to regulation, activity is up-regulated by PRK2/PKN2-mediated phosphorylation. Its function is as follows. Packages viral RNA to form a viral nucleocapsid, and promotes virion budding. Participates in the viral particle production as a result of its interaction with the non-structural protein 5A. Binds RNA and may function as a RNA chaperone to induce the RNA structural rearrangements taking place during virus replication. Modulates viral translation initiation by interacting with viral IRES and 40S ribosomal subunit. Affects various cell signaling pathways, host immunity and lipid metabolism. Prevents the establishment of cellular antiviral state by blocking the interferon-alpha/beta (IFN-alpha/beta) and IFN-gamma signaling pathways and by blocking the formation of phosphorylated STAT1 and promoting ubiquitin-mediated proteasome-dependent degradation of STAT1. Activates STAT3 leading to cellular transformation. Regulates the activity of cellular genes, including c-myc and c-fos. May repress the promoter of p53, and sequester CREB3 and SP110 isoform 3/Sp110b in the cytoplasm. Represses cell cycle negative regulating factor CDKN1A, thereby interrupting an important check point of normal cell cycle regulation. Targets transcription factors involved in the regulation of inflammatory responses and in the immune response: suppresses TNF-induced NF-kappa-B activation, and activates AP-1. Binds to dendritic cells (DCs) via C1QR1, resulting in down-regulation of T-lymphocytes proliferation. Alters lipid metabolism by interacting with hepatocellular proteins involved in lipid accumulation and storage. Induces up-regulation of FAS promoter activity, and thereby contributes to the increased triglyceride accumulation in hepatocytes (steatosis). In terms of biological role, forms a heterodimer with envelope glycoprotein E2, which mediates virus attachment to the host cell, virion internalization through clathrin-dependent endocytosis and fusion with host membrane. Fusion with the host cell is most likely mediated by both E1 and E2, through conformational rearrangements of the heterodimer required for fusion rather than a classical class II fusion mechanism. E1/E2 heterodimer binds host apolipoproteins such as APOB and ApoE thereby forming a lipo-viro-particle (LVP). APOE associated to the LVP allows the initial virus attachment to cell surface receptors such as the heparan sulfate proteoglycans (HSPGs), syndecan-1 (SDC1), syndecan-1 (SDC2), the low-density lipoprotein receptor (LDLR) and scavenger receptor class B type I (SCARB1). The cholesterol transfer activity of SCARB1 allows E2 exposure and binding of E2 to SCARB1 and the tetraspanin CD81. E1/E2 heterodimer binding on CD81 activates the epithelial growth factor receptor (EGFR) signaling pathway. Diffusion of the complex E1-E2-EGFR-SCARB1-CD81 to the cell lateral membrane allows further interaction with Claudin 1 (CLDN1) and occludin (OCLN) to finally trigger HCV entry. Forms a heterodimer with envelope glycoprotein E1, which mediates virus attachment to the host cell, virion internalization through clathrin-dependent endocytosis and fusion with host membrane. Fusion with the host cell is most likely mediated by both E1 and E2, through conformational rearrangements of the heterodimer required for fusion rather than a classical class II fusion mechanism. The interaction between envelope glycoprotein E2 and host apolipoprotein E/APOE allows the proper assembly, maturation and infectivity of the viral particles. This interaction is probably promoted via the up-regulation of cellular autophagy by the virus. E1/E2 heterodimer binds host apolipoproteins such as APOB and APOE thereby forming a lipo-viro-particle (LVP). APOE associated to the LVP allows the initial virus attachment to cell surface receptors such as the heparan sulfate proteoglycans (HSPGs), syndecan-1 (SDC1), syndecan-1 (SDC2), the low-density lipoprotein receptor (LDLR) and scavenger receptor class B type I (SCARB1). The cholesterol transfer activity of SCARB1 allows E2 exposure and binding of E2 to SCARB1 and the tetraspanin CD81. E1/E2 heterodimer binding on CD81 activates the epithelial growth factor receptor (EGFR) signaling pathway. Diffusion of the complex E1-E2-EGFR-SCARB1-CD81 to the cell lateral membrane allows further interaction with Claudin 1 (CLDN1) and occludin (OCLN) to finally trigger HCV entry. Inhibits host EIF2AK2/PKR activation, preventing the establishment of an antiviral state. Viral ligand for CD209/DC-SIGN and CLEC4M/DC-SIGNR, which are respectively found on dendritic cells (DCs), and on liver sinusoidal endothelial cells and macrophage-like cells of lymph node sinuses. These interactions allow the capture of circulating HCV particles by these cells and subsequent facilitated transmission to permissive cells such as hepatocytes and lymphocyte subpopulations. The interaction between E2 and host amino acid transporter complex formed by SLC3A2 and SLC7A5/LAT1 may facilitate viral entry into host cell. Functionally, ion channel protein that acts as a viroporin and plays an essential role in the assembly, envelopment and secretion of viral particles. Regulates the host cell secretory pathway, which induces the intracellular retention of viral glycoproteins and favors assembly of viral particles. Creates a pore in acidic organelles and releases Ca(2+) and H(+) in the cytoplasm of infected cells, leading to a productive viral infection. High levels of cytoplasmic Ca(2+) may trigger membrane trafficking and transport of viral ER-associated proteins to viroplasms, sites of viral genome replication. This ionic imbalance induces the assembly of the inflammasome complex, which triggers the maturation of pro-IL-1beta into IL-1beta through the action of caspase-1. Targets also host mitochondria and induces mitochondrial depolarization. In addition of its role as a viroporin, acts as a lipid raft adhesion factor. Its function is as follows. Cysteine protease required for the proteolytic auto-cleavage between the non-structural proteins NS2 and NS3. The N-terminus of NS3 is required for the function of NS2 protease (active region NS2-3). Promotes the initiation of viral particle assembly by mediating the interaction between structural and non-structural proteins. In terms of biological role, displays three enzymatic activities: serine protease with a chymotrypsin-like fold, NTPase and RNA helicase. NS3 serine protease, in association with NS4A, is responsible for the cleavages of NS3-NS4A, NS4A-NS4B, NS4B-NS5A and NS5A-NS5B. The NS3/NS4A complex prevents phosphorylation of host IRF3, thus preventing the establishment of dsRNA induced antiviral state. The NS3/NS4A complex induces host amino acid transporter component SLC3A2, thus contributing to HCV propagation. NS3 RNA helicase binds to RNA and unwinds both dsDNA and dsRNA in the 3' to 5' direction, and likely resolves RNA complicated stable secondary structures in the template strand. Binds a single ATP and catalyzes the unzipping of a single base pair of dsRNA. Inhibits host antiviral proteins TBK1 and IRF3 thereby preventing the establishment of an antiviral state. Cleaves host MAVS/CARDIF thereby preventing the establishment of an antiviral state. Cleaves host TICAM1/TRIF, thereby disrupting TLR3 signaling and preventing the establishment of an antiviral state. Peptide cofactor which forms a non-covalent complex with the N-terminal of NS3 serine protease. The NS3/NS4A complex prevents phosphorylation of host IRF3, thus preventing the establishment of dsRNA induced antiviral state. The NS3/NS4A complex induces host amino acid transporter component SLC3A2, thus contributing to HCV propagation. Functionally, induces a specific membrane alteration that serves as a scaffold for the virus replication complex. This membrane alteration gives rise to the so-called ER-derived membranous web that contains the replication complex. NS4B self-interaction contributes to its function in membranous web formation. Promotes host TRIF protein degradation in a CASP8-dependent manner thereby inhibiting host TLR3-mediated interferon signaling. Disrupts the interaction between STING and TBK1 contributing to the inhibition of interferon signaling. Its function is as follows. Phosphorylated protein that is indispensable for viral replication and assembly. Both hypo- and hyperphosphorylated states are required for the viral life cycle. The hyperphosphorylated form of NS5A is an inhibitor of viral replication. Involved in RNA-binding and especially in binding to the viral genome. Zinc is essential for RNA-binding. Participates in the viral particle production as a result of its interaction with the mature viral core protein. Its interaction with host VAPB may target the viral replication complex to vesicles. Down-regulates viral IRES translation initiation. Mediates interferon resistance, presumably by interacting with and inhibiting host EIF2AK2/PKR. Prevents BIN1-induced apoptosis. Acts as a transcriptional activator of some host genes important for viral replication when localized in the nucleus. Via the interaction with host PACSIN2, modulates lipid droplet formation in order to promote virion assembly. Modulates TNFRSF21/DR6 signaling pathway for viral propagation. In terms of biological role, RNA-dependent RNA polymerase that performs primer-template recognition and RNA synthesis during viral replication. Initiates RNA transcription/replication at a flavin adenine dinucleotide (FAD), resulting in a 5'- FAD cap on viral RNAs. In this way, recognition of viral 5' RNA by host pattern recognition receptors can be bypassed, thereby evading activation of antiviral pathways. In Homo sapiens (Human), this protein is Genome polyprotein.